The chain runs to 514 residues: 1-pyrroline-5-carboxylate dehydrogenase (514 aa).

Catalysis depends on residues glutamate 286 and cysteine 320.

Belongs to the aldehyde dehydrogenase family. RocA subfamily.

It catalyses the reaction L-glutamate 5-semialdehyde + NAD(+) + H2O = L-glutamate + NADH + 2 H(+). The protein operates within amino-acid degradation; L-proline degradation into L-glutamate; L-glutamate from L-proline: step 2/2. The protein is 1-pyrroline-5-carboxylate dehydrogenase of Staphylococcus aureus (strain MW2).